The following is a 350-amino-acid chain: Formimidoylglutamase (350 aa).

Residues H130, D165, H167, D169, D269, and D271 each coordinate Mn(2+).

It belongs to the arginase family. It depends on Mn(2+) as a cofactor.

It catalyses the reaction N-formimidoyl-L-glutamate + H2O = formamide + L-glutamate. It participates in amino-acid degradation; L-histidine degradation into L-glutamate; L-glutamate from N-formimidoyl-L-glutamate (hydrolase route): step 1/1. Functionally, catalyzes the conversion of N-formimidoyl-L-glutamate to L-glutamate and formamide. In Aliivibrio fischeri (strain ATCC 700601 / ES114) (Vibrio fischeri), this protein is Formimidoylglutamase.